The following is a 198-amino-acid chain: Recombination protein RecR (198 aa).

The segment at 56-71 (CDICGNVSEEPTCRIC) adopts a C4-type zinc-finger fold. One can recognise a Toprim domain in the interval 79–175 (AVVCVVEEPK…NVTRLASGLP (97 aa)).

It belongs to the RecR family.

Its function is as follows. May play a role in DNA repair. It seems to be involved in an RecBC-independent recombinational process of DNA repair. It may act with RecF and RecO. In Saccharopolyspora erythraea (strain ATCC 11635 / DSM 40517 / JCM 4748 / NBRC 13426 / NCIMB 8594 / NRRL 2338), this protein is Recombination protein RecR.